A 180-amino-acid chain; its full sequence is Acireductone dioxygenase (180 aa).

Fe(2+) is bound by residues histidine 97, histidine 99, glutamate 103, and histidine 141. Ni(2+)-binding residues include histidine 97, histidine 99, glutamate 103, and histidine 141.

This sequence belongs to the acireductone dioxygenase (ARD) family. In terms of assembly, monomer. Requires Fe(2+) as cofactor. It depends on Ni(2+) as a cofactor.

It carries out the reaction 1,2-dihydroxy-5-(methylsulfanyl)pent-1-en-3-one + O2 = 3-(methylsulfanyl)propanoate + CO + formate + 2 H(+). It catalyses the reaction 1,2-dihydroxy-5-(methylsulfanyl)pent-1-en-3-one + O2 = 4-methylsulfanyl-2-oxobutanoate + formate + 2 H(+). The protein operates within amino-acid biosynthesis; L-methionine biosynthesis via salvage pathway; L-methionine from S-methyl-5-thio-alpha-D-ribose 1-phosphate: step 5/6. Catalyzes 2 different reactions between oxygen and the acireductone 1,2-dihydroxy-3-keto-5-methylthiopentene (DHK-MTPene) depending upon the metal bound in the active site. Fe-containing acireductone dioxygenase (Fe-ARD) produces formate and 2-keto-4-methylthiobutyrate (KMTB), the alpha-ketoacid precursor of methionine in the methionine recycle pathway. Ni-containing acireductone dioxygenase (Ni-ARD) produces methylthiopropionate, carbon monoxide and formate, and does not lie on the methionine recycle pathway. This chain is Acireductone dioxygenase, found in Acidiphilium cryptum (strain JF-5).